The chain runs to 217 residues: Snake venom metalloproteinase lebetase-4 (217 aa).

A propeptide spanning residues 1–14 is cleaved from the precursor; sequence SCRKKASQLNLTPE. Gln15 carries the pyrrolidone carboxylic acid modification. The Peptidase M12B domain maps to 21 to 217; sequence RYIELVIVAD…HNPQCILNQP (197 aa). 2 residues coordinate Ca(2+): Glu24 and Asp108. 3 disulfide bridges follow: Cys132/Cys212, Cys172/Cys196, and Cys174/Cys179. His157 is a binding site for Zn(2+). The active site involves Glu158. His161 and His167 together coordinate Zn(2+). Ca(2+) is bound by residues Cys212 and Asn215.

It belongs to the venom metalloproteinase (M12B) family. P-I subfamily. In terms of assembly, monomer. It depends on Zn(2+) as a cofactor. In terms of tissue distribution, expressed by the venom gland.

The protein localises to the secreted. Fibrinolytic and caseinolytic activities are inhibited by Cd(2+), Cu(2+) and Co(2+) ions. Not inhibited by Mg(2+), Ca(2+) and Ba(2+). Also inhibited by EDTA, EGTA and 1,10-phenanthroline. Its function is as follows. Snake venom zinc metalloprotease that hydrolyzes the Aalpha-chain and more slowly the Bbeta-chain of fibrin and fibrinogen. Also hydrolyzes casein and B-chain of oxidized insulin. Its fibrinolytic activity is direct, without any plasminogen activation. Inhibits ADP-induced and collagen-induced platelet aggregation. Shows low hemorrhagic activity. Cleaves the plasma proteinase inhibitors alpha(2)-macroglobulin (A2M) and alpha(2)M-related pregnancy zone protein (PZP), and is inhibited by them. The polypeptide is Snake venom metalloproteinase lebetase-4 (Macrovipera lebetinus (Levantine viper)).